The chain runs to 315 residues: DNA-directed RNA polymerase subunit alpha (315 aa).

The alpha N-terminal domain (alpha-NTD) stretch occupies residues 1–228 (MLEIEKPKIE…EHFKLFMTLT (228 aa)). Residues 245 to 315 (KEKVLEMTIE…LGLGLKKSDE (71 aa)) form an alpha C-terminal domain (alpha-CTD) region.

The protein belongs to the RNA polymerase alpha chain family. As to quaternary structure, homodimer. The RNAP catalytic core consists of 2 alpha, 1 beta, 1 beta' and 1 omega subunit. When a sigma factor is associated with the core the holoenzyme is formed, which can initiate transcription.

It catalyses the reaction RNA(n) + a ribonucleoside 5'-triphosphate = RNA(n+1) + diphosphate. Functionally, DNA-dependent RNA polymerase catalyzes the transcription of DNA into RNA using the four ribonucleoside triphosphates as substrates. This chain is DNA-directed RNA polymerase subunit alpha, found in Clostridium novyi (strain NT).